Reading from the N-terminus, the 405-residue chain is MADRSDIIIENYQVSPRIGFLPDKPPLARLPHPYYAGWEETISRVAPSRGDGRAREYIDEMPLLSTGKLRVLPEWHRAYTLLSILSQVYIWDGDEPSNRIPASIASPLLAVSEHLGLNPCASFASFCLWNIRPVGRHGLNYAAAYEPENLGQITSFTGTTDEEWFFSISAAIEARGGCLIPGMFDTIEAAREGNSQRVQEFLGTLASCVRHMCKDLKRMYEGCAPSVFYHDVRPFLNGGKGVNKDTQTPGGVFYENESGGGQWHQYQGGSNAQSSLIQLLDIFLGVDHSITAANKPHEGYHREMQSYMPGKHRQFLQLMSRLSNVREFVLCHPVTAEIRIEYSRATAELVALRQTHMIMASRYIVMQGRKGSMCRDSSKGTGGTEFMPFLKDARDCTLATCCPRP.

His312 serves as a coordination point for heme.

Belongs to the indoleamine 2,3-dioxygenase family. The cofactor is heme.

The catalysed reaction is L-tryptophan + O2 = N-formyl-L-kynurenine. It functions in the pathway secondary metabolite biosynthesis. Functionally, indoleamine 2,3-dioxygenase; part of the gene cluster that mediates the biosynthesis of aspcandine, a pyrrolobenzazepine alkaloid. Initially, the indoleamine 2,3-dioxygenase acdA accepts L-tryptophan and performs the oxidative opening of the indole ring to yield N'-formyl-L-kynurenine, which undergoes the spontaneous deformylation reaction to provide L-kynurenine. The kynurenine 3-monooxygenase acdD then hydroxylates L-kynurenine to afford 3-hydroxy-L-kynurenine. 3-hydroxy-L-kynurenine is activated by the A domain of the NRPS-PKS acdB and subsequently loaded onto the enzyme. The KS domain conducts the decarboxylative condensation of the 3-hydroxy-L-kynurenyl and malonyl moieties, and subsequent nucleophilic attacks by the two amino groups would occur nonenzymatically at two distinct positions, achieving the chain release and the construction of the tricyclic system. Finally, a dehydration reaction completes the biosynthesis to yield aspcandine. The sequence is that of Indoleamine 2,3-dioxygenase acdA from Aspergillus candidus.